A 231-amino-acid polypeptide reads, in one-letter code: 2-amino-5-formylamino-6-ribosylaminopyrimidin-4(3H)-one 5'-monophosphate deformylase (231 aa).

Residues Glu29, His31, Asp40, and His110 each coordinate Fe cation.

It belongs to the creatininase superfamily. FAPy deformylase family. As to quaternary structure, homodimer. Requires Fe(2+) as cofactor. It depends on Zn(2+) as a cofactor.

The catalysed reaction is 2-amino-5-formylamino-6-(5-phospho-D-ribosylamino)pyrimidin-4(3H)-one + H2O = 2,5-diamino-6-(1-D-ribosylamino)pyrimidin-4(3H)-one 5'-phosphate + formate + H(+). The protein operates within cofactor biosynthesis; coenzyme F420 biosynthesis. It participates in cofactor biosynthesis; riboflavin biosynthesis. Its function is as follows. Catalyzes the hydrolysis of the formamide of 2-amino-5-formylamino-6-ribosylamino-4(3H)-pyrimidinone 5'-monophosphate (FAPy) to form 2,5-diamino-6-ribosylamino-4(3H)-pyrimidinone 5'-phosphate (APy). The sequence is that of 2-amino-5-formylamino-6-ribosylaminopyrimidin-4(3H)-one 5'-monophosphate deformylase from Methanothermobacter marburgensis (strain ATCC BAA-927 / DSM 2133 / JCM 14651 / NBRC 100331 / OCM 82 / Marburg) (Methanobacterium thermoautotrophicum).